We begin with the raw amino-acid sequence, 210 residues long: CASP-like protein 3A2 (210 aa).

Residues M1–N45 are Cytoplasmic-facing. A helical membrane pass occupies residues V46–A66. Topologically, residues Q67 to E92 are extracellular. A helical transmembrane segment spans residues Y93–V113. Topologically, residues S114–H128 are cytoplasmic. The helical transmembrane segment at A129–A149 threads the bilayer. Over A150–D178 the chain is Extracellular. An N-linked (GlcNAc...) asparagine glycan is attached at N157. A helical transmembrane segment spans residues H179–V199. Residues Q200–Y210 are Cytoplasmic-facing.

It belongs to the Casparian strip membrane proteins (CASP) family. In terms of assembly, homodimer and heterodimers.

It localises to the cell membrane. The sequence is that of CASP-like protein 3A2 from Populus trichocarpa (Western balsam poplar).